The sequence spans 312 residues: Olfactory receptor 51A7 (312 aa).

At 1 to 25 (MSVLNNSEVKLFLLIGIPGLEHAHI) the chain is on the extracellular side. Asn5 is a glycosylation site (N-linked (GlcNAc...) asparagine). A helical membrane pass occupies residues 26 to 46 (WFSIPICLMYLLAIMGNCTIL). The Cytoplasmic segment spans residues 47 to 54 (FIIKTEPS). A helical transmembrane segment spans residues 55–75 (LHEPMYYFLAMLAVSDMGLSL). Residues 76–99 (SSLPTMLRVFLFNAMGISPNACFA) lie on the Extracellular side of the membrane. Cys97 and Cys189 form a disulfide bridge. Residues 100–120 (QEFFIHGFTVMESSVLLIMSL) form a helical membrane-spanning segment. At 121 to 139 (DRFLAIHNPLRYSSILTSN) the chain is on the cytoplasmic side. The helical transmembrane segment at 140 to 160 (RVAKMGLILAIRSILLVIPFP) threads the bilayer. Topologically, residues 161–196 (FTLRRLKYCQKNLLSHSYCLHQDTMKLACSDNKTNV) are extracellular. Asn192 carries N-linked (GlcNAc...) asparagine glycosylation. The helical transmembrane segment at 197–216 (IYGFFIALCTMLDLALIVLS) threads the bilayer. Residues 217 to 236 (YVLILKTILSIASLAERLKA) lie on the Cytoplasmic side of the membrane. Residues 237 to 257 (LNTCVSHICAVLTFYVPIITL) form a helical membrane-spanning segment. Over 258–272 (AAMHHFAKHKSPLVV) the chain is Extracellular. A helical membrane pass occupies residues 273–293 (ILIADMFLLVPPLMNPIVYCV). Over 294–312 (KTRQIWEKILGKLLNVCGR) the chain is Cytoplasmic.

The protein belongs to the G-protein coupled receptor 1 family.

The protein localises to the cell membrane. Odorant receptor. This chain is Olfactory receptor 51A7 (OR51A7), found in Homo sapiens (Human).